The chain runs to 118 residues: IgW heavy chain V region W26 (118 aa).

The 109-residue stretch at 1-109 (NIVLTQPESA…PQWGYWGSGT (109 aa)) folds into the Ig-like domain. C22 and C93 are oxidised to a cystine.

As to expression, expressed mainly in lymphoid tissues including spleen, epigonal organ and circulating lymphocytes.

In Heterodontus francisci (Horn shark), this protein is IgW heavy chain V region W26.